We begin with the raw amino-acid sequence, 198 residues long: Recombination protein RecR (198 aa).

Residues 58–73 (CSICGNYTDSDPCAIC) form a C4-type zinc finger. In terms of domain architecture, Toprim spans 81–175 (SIICVIEQPK…KVTRIAHGVP (95 aa)).

This sequence belongs to the RecR family.

Its function is as follows. May play a role in DNA repair. It seems to be involved in an RecBC-independent recombinational process of DNA repair. It may act with RecF and RecO. This chain is Recombination protein RecR, found in Clostridium novyi (strain NT).